Here is a 354-residue protein sequence, read N- to C-terminus: MAGSDEVNRNECKTVVPLHTWVLISNFKLSYNILRRADGTFERDLGEYLDRRVPANARPLEGVSSFDHIIDQSVGLEVRIYRAAAEGDAEEGAAAVTRPILEFLTDAPAAEPFPVIIFFHGGSFVHSSASSTIYDSLCRRFVKLSKGVVVSVNYRRAPEHRYPCAYDDGWTALKWVMSQPFMRSGGDAQARVFLSGDSSGGNIAHHVAVRAADEGVKVCGNILLNAMFGGTERTESERRLDGKYFVTLQDRDWYWKAYLPEDADRDHPACNPFGPNGRRLGGLPFAKSLIIVSGLDLTCDRQLAYADALREDGHHVKVVQCENATVGFYLLPNTVHYHEVMEEISDFLNANLYY.

The Involved in the stabilization of the negatively charged intermediate by the formation of the oxyanion hole signature appears at 120–122 (HGG). Residues 122 to 123 (GS), Tyr-134, Ser-198, and Asp-250 contribute to the gibberellin A3 site. Gibberellin A4-binding positions include 122 to 123 (GS), Tyr-134, and Ser-198. The active site involves Ser-198. Asp-296 is a catalytic residue. Position 327 (Gly-327) interacts with gibberellin A3. Gly-327 is a gibberellin A4 binding site.

Belongs to the 'GDXG' lipolytic enzyme family. In terms of assembly, interacts with the DELLA protein SLR1 in a GA-dependent manner, resulting in subsequent SLR1 degradation.

The protein localises to the nucleus. Functionally, functions as a soluble gibberellin (GA) receptor. GA is an essential hormone that regulates growth and development in plants. Binds with high affinity the biologically active GAs such as GA1, GA3 and GA4, but has low or no affinity for the biologically inactive GAs. Upon GA-binding, it interacts with the DELLA protein SLR1, a repressor of GA signaling. This leads to SLR1 degradation by the proteasome, allowing the GA signaling pathway. The chain is Gibberellin receptor GID1 from Oryza sativa subsp. japonica (Rice).